A 180-amino-acid polypeptide reads, in one-letter code: Thioredoxin 3 (180 aa).

Residues Met-1–Leu-3 are Cytoplasmic-facing. Residues Ile-4–Ile-24 traverse the membrane as a helical; Signal-anchor for type II membrane protein segment. Topologically, residues Asn-25–Lys-180 are lumenal. The Thioredoxin domain maps to Ser-29 to Leu-176. Active-site nucleophile residues include Cys-99 and Cys-102. An intrachain disulfide couples Cys-99 to Cys-102.

This sequence belongs to the thioredoxin family. The disulfide bond between Cys-99 and Cys-102 acts as a redox-active center and is reduced by thioredoxin reductase TRXR.

The protein resides in the endoplasmic reticulum membrane. Its function is as follows. Participates in various redox reactions through the reversible oxidation of its active center dithiol to a disulfide and catalyzes dithiol-disulfide exchange reactions. This chain is Thioredoxin 3, found in Plasmodium falciparum (isolate 3D7).